A 317-amino-acid chain; its full sequence is Melanocyte-stimulating hormone receptor (317 aa).

Residues 1–37 (MPVQGSQRRLLGSLNSTPTATPHLGLAANQTGARCLE) are Extracellular-facing. N29 is a glycosylation site (N-linked (GlcNAc...) asparagine). Residues 38 to 63 (VSIPDGLFLSLGLVSLVENVLVVTAI) form a helical membrane-spanning segment. At 64–72 (AKNRNLHSP) the chain is on the cytoplasmic side. The chain crosses the membrane as a helical span at residues 73–93 (MYCFICCLALSDLLVSGSNML). Residues 94-118 (ETAVILLLEAGALAARAAVVQQLDN) lie on the Extracellular side of the membrane. A helical transmembrane segment spans residues 119–140 (VIDVITCSSMLSSLCFLGAIAV). Over 141–163 (DRYISIFYALRYHSIVTLPRARR) the chain is Cytoplasmic. The chain crosses the membrane as a helical span at residues 164–183 (AVAAIWVASVLFSMLFIAYY). At 184 to 191 (DHAAVLLC) the chain is on the extracellular side. The helical transmembrane segment at 192-211 (LVVFFLAMLVLMAVLYVHML) threads the bilayer. The Cytoplasmic segment spans residues 212-240 (ARACQHAQGIARLHKRQRPAHQSFGLKGA). A helical membrane pass occupies residues 241-266 (ATLTILLGIFFLCWGPFFLHLTLIVL). Residues 267-279 (CPQHPTCSCIFKN) are Extracellular-facing. A helical transmembrane segment spans residues 280 to 300 (FNLFLTLIICNAIIDPLIYAF). The Cytoplasmic portion of the chain corresponds to 301-317 (RSQELRRTLKEVLLCSW). Residue C315 is the site of S-palmitoyl cysteine attachment.

This sequence belongs to the G-protein coupled receptor 1 family. As to quaternary structure, interacts with MGRN1, but does not undergo MGRN1-mediated ubiquitination; this interaction competes with GNAS-binding and thus inhibits agonist-induced cAMP production. Interacts with OPN3; the interaction results in a decrease in MC1R-mediated cAMP signaling and ultimately a decrease in melanin production in melanocytes.

Its subcellular location is the cell membrane. Receptor for MSH (alpha, beta and gamma) and ACTH. The activity of this receptor is mediated by G proteins which activate adenylate cyclase. Mediates melanogenesis, the production of eumelanin (black/brown) and phaeomelanin (red/yellow), via regulation of cAMP signaling in melanocytes. The polypeptide is Melanocyte-stimulating hormone receptor (MC1R) (Erythrocebus patas (Red guenon)).